The following is a 131-amino-acid chain: Small ribosomal subunit protein uS11 (131 aa).

This sequence belongs to the universal ribosomal protein uS11 family. In terms of assembly, part of the 30S ribosomal subunit. Interacts with proteins S7 and S18. Binds to IF-3.

In terms of biological role, located on the platform of the 30S subunit, it bridges several disparate RNA helices of the 16S rRNA. Forms part of the Shine-Dalgarno cleft in the 70S ribosome. This chain is Small ribosomal subunit protein uS11, found in Natranaerobius thermophilus (strain ATCC BAA-1301 / DSM 18059 / JW/NM-WN-LF).